A 255-amino-acid chain; its full sequence is Zinc import ATP-binding protein ZnuC (255 aa).

An ABC transporter domain is found at 5-220 (VALEHIAVAF…PDFIAMFGYR (216 aa)).

It belongs to the ABC transporter superfamily. Zinc importer (TC 3.A.1.15.5) family. In terms of assembly, the complex is composed of two ATP-binding proteins (ZnuC), two transmembrane proteins (ZnuB) and a solute-binding protein (ZnuA).

It is found in the cell inner membrane. It catalyses the reaction Zn(2+)(out) + ATP(in) + H2O(in) = Zn(2+)(in) + ADP(in) + phosphate(in) + H(+)(in). In terms of biological role, part of the ABC transporter complex ZnuABC involved in zinc import. Responsible for energy coupling to the transport system. This Sodalis glossinidius (strain morsitans) protein is Zinc import ATP-binding protein ZnuC.